The following is a 162-amino-acid chain: Ciliary microtubule inner protein 5 (162 aa).

Residues 1 to 44 (MGSHPTPGLQRTTSAGYRLPPTRPPASVSPAARGGPMASRGLAG) form a disordered region.

Its subcellular location is the cell projection. It is found in the cilium. This is Ciliary microtubule inner protein 5 from Homo sapiens (Human).